We begin with the raw amino-acid sequence, 181 residues long: Small ribosomal subunit protein uS4 (181 aa).

The S4 RNA-binding domain maps to 104–166 (RRLQTIVYKK…VTSSFKSRPP (63 aa)).

It belongs to the universal ribosomal protein uS4 family. In terms of assembly, part of the 30S ribosomal subunit. Contacts protein S5. The interaction surface between S4 and S5 is involved in control of translational fidelity.

Its function is as follows. One of the primary rRNA binding proteins, it binds directly to 16S rRNA where it nucleates assembly of the body of the 30S subunit. With S5 and S12 plays an important role in translational accuracy. The sequence is that of Small ribosomal subunit protein uS4 from Saccharolobus islandicus (strain Y.N.15.51 / Yellowstone #2) (Sulfolobus islandicus).